A 98-amino-acid polypeptide reads, in one-letter code: Small ribosomal subunit protein bS6 (98 aa).

Belongs to the bacterial ribosomal protein bS6 family.

In terms of biological role, binds together with bS18 to 16S ribosomal RNA. This chain is Small ribosomal subunit protein bS6, found in Staphylococcus haemolyticus (strain JCSC1435).